The following is a 138-amino-acid chain: Large-conductance mechanosensitive channel (138 aa).

The next 3 helical transmembrane spans lie at 19 to 39, 40 to 60, and 81 to 101; these read VGVI…GDVI, MPVI…IGLS, and GSFL…FIVI.

This sequence belongs to the MscL family. Homopentamer.

The protein resides in the cell inner membrane. Functionally, channel that opens in response to stretch forces in the membrane lipid bilayer. May participate in the regulation of osmotic pressure changes within the cell. The sequence is that of Large-conductance mechanosensitive channel from Afipia carboxidovorans (strain ATCC 49405 / DSM 1227 / KCTC 32145 / OM5) (Oligotropha carboxidovorans).